The chain runs to 291 residues: Beta-lactamase CTX-M-25 (291 aa).

A signal peptide spans 1–30 (MMRKSVRRAMLMTTACVSLLLASVPLCAQA). Catalysis depends on S73, which acts as the Nucleophile; acyl-ester intermediate. Positions 76, 133, 169, and 240 each coordinate a beta-lactam.

Belongs to the class-A beta-lactamase family. Monomer.

It localises to the secreted. The catalysed reaction is a beta-lactam + H2O = a substituted beta-amino acid. Its activity is regulated as follows. Inhibited by the beta-lactamase-blocking agents clavulanic acid and tazobactam; in the DH10B strain. Its function is as follows. Extended-spectrum beta-lactamase (ESBL) which confers resistance to penicillins, as well as first, second and third-generation cephalosporins. Has cefotaxime-hydrolyzing activity. Inactive against cephalosporin antibiotic, cefoxitin, and the carbapenem, imipenem. The sequence is that of Beta-lactamase CTX-M-25 from Escherichia coli.